The following is a 108-amino-acid chain: Integration host factor subunit alpha (108 aa).

Belongs to the bacterial histone-like protein family. Heterodimer of an alpha and a beta chain.

This protein is one of the two subunits of integration host factor, a specific DNA-binding protein that functions in genetic recombination as well as in transcriptional and translational control. This is Integration host factor subunit alpha from Methylorubrum extorquens (strain CM4 / NCIMB 13688) (Methylobacterium extorquens).